The sequence spans 1331 residues: Beta-mannanase/endoglucanase A (1331 aa).

The first 41 residues, 1-41, serve as a signal peptide directing secretion; it reads MRLKTKIRKKWLSVLCTVVFLLNILFIANVTILPKVGAATS. The interval 42 to 325 is catalytic (mannanase); sequence NDGVVKIDTS…YKTNAIGTSS (284 aa). E162 (proton donor) is an active-site residue. E257 functions as the Nucleophile in the catalytic mechanism. Disordered stretches follow at residues 319-363, 515-566, and 717-780; these read NAIG…TPAT, PSGA…TPAT, and EPSG…PLPT. The span at 323-335 shows a compositional bias: low complexity; it reads TSSTPTPTSTVTP. The 154-residue stretch at 363–516 folds into the CBM3 1 domain; that stretch reads TSGQIKVLYA…GVLVWGQEPS (154 aa). 2 stretches are compositionally biased toward pro residues: residues 521–541 and 551–561; these read APAPTATPTPTPTVTPTPTVT and TPTPTPTPTPV. In terms of domain architecture, CBM3 2 spans 566 to 719; the sequence is TGGQIKVLYA…GVLVWGQEPS (154 aa). Over residues 721 to 735 the composition is skewed to low complexity; it reads TTPSPTSTPTVTVTP. Pro residues-rich tracts occupy residues 736-756 and 766-780; these read TPTPTPTPTPTPTVTPTPTVT and TPTPTPIPTVTPLPT. Positions 781–1331 are catalytic (endoglucanase); sequence ISPSPSVVEI…RNLVFMRALV (551 aa).

It in the N-terminal section; belongs to the glycosyl hydrolase 5 (cellulase A) family. The protein in the C-terminal section; belongs to the glycosyl hydrolase 44 (cellulase J) family.

It carries out the reaction Random hydrolysis of (1-&gt;4)-beta-D-mannosidic linkages in mannans, galactomannans and glucomannans.. The enzyme catalyses Endohydrolysis of (1-&gt;4)-beta-D-glucosidic linkages in cellulose, lichenin and cereal beta-D-glucans.. Functionally, degradation of hemicelluloses, the second most abundant polysaccharides in nature. Contains two catalytic domains with mannanase and endoglucanase activities. This chain is Beta-mannanase/endoglucanase A (manA), found in Caldicellulosiruptor saccharolyticus (Caldocellum saccharolyticum).